The chain runs to 349 residues: Isopentenyl-diphosphate delta-isomerase (349 aa).

8–9 (RK) contributes to the substrate binding site. Residues Ser66, 67–69 (SMT), Ser97, and Asn125 each bind FMN. 97–99 (STR) provides a ligand contact to substrate. Residue Gln160 participates in substrate binding. Glu161 lines the Mg(2+) pocket. FMN-binding positions include Lys192, Thr222, 272–274 (GMK), and 293–294 (AR).

This sequence belongs to the IPP isomerase type 2 family. Homooctamer. Dimer of tetramers. It depends on FMN as a cofactor. NADPH is required as a cofactor. Requires Mg(2+) as cofactor.

The protein localises to the cytoplasm. It carries out the reaction isopentenyl diphosphate = dimethylallyl diphosphate. In terms of biological role, involved in the biosynthesis of isoprenoids. Catalyzes the 1,3-allylic rearrangement of the homoallylic substrate isopentenyl (IPP) to its allylic isomer, dimethylallyl diphosphate (DMAPP). In Oceanobacillus iheyensis (strain DSM 14371 / CIP 107618 / JCM 11309 / KCTC 3954 / HTE831), this protein is Isopentenyl-diphosphate delta-isomerase.